The following is a 155-amino-acid chain: SsrA-binding protein (155 aa).

Residues Arg-136 to Tyr-155 form a disordered region.

The protein belongs to the SmpB family.

Its subcellular location is the cytoplasm. In terms of biological role, required for rescue of stalled ribosomes mediated by trans-translation. Binds to transfer-messenger RNA (tmRNA), required for stable association of tmRNA with ribosomes. tmRNA and SmpB together mimic tRNA shape, replacing the anticodon stem-loop with SmpB. tmRNA is encoded by the ssrA gene; the 2 termini fold to resemble tRNA(Ala) and it encodes a 'tag peptide', a short internal open reading frame. During trans-translation Ala-aminoacylated tmRNA acts like a tRNA, entering the A-site of stalled ribosomes, displacing the stalled mRNA. The ribosome then switches to translate the ORF on the tmRNA; the nascent peptide is terminated with the 'tag peptide' encoded by the tmRNA and targeted for degradation. The ribosome is freed to recommence translation, which seems to be the essential function of trans-translation. This is SsrA-binding protein from Nostoc punctiforme (strain ATCC 29133 / PCC 73102).